A 398-amino-acid chain; its full sequence is Tryptophan synthase beta chain (398 aa).

Lys87 is subject to N6-(pyridoxal phosphate)lysine.

Belongs to the TrpB family. As to quaternary structure, tetramer of two alpha and two beta chains. It depends on pyridoxal 5'-phosphate as a cofactor.

The catalysed reaction is (1S,2R)-1-C-(indol-3-yl)glycerol 3-phosphate + L-serine = D-glyceraldehyde 3-phosphate + L-tryptophan + H2O. It participates in amino-acid biosynthesis; L-tryptophan biosynthesis; L-tryptophan from chorismate: step 5/5. The beta subunit is responsible for the synthesis of L-tryptophan from indole and L-serine. This Blochmanniella floridana protein is Tryptophan synthase beta chain.